The primary structure comprises 70 residues: MPGIVVHQGEDFESAYRKFKRQVDRNLIVVELRKRRFYEPPSERRKKEKIATRKKILRKLWMLRRYESRL.

The protein belongs to the bacterial ribosomal protein bS21 family.

In Nautilia profundicola (strain ATCC BAA-1463 / DSM 18972 / AmH), this protein is Small ribosomal subunit protein bS21.